A 305-amino-acid polypeptide reads, in one-letter code: Ornithine carbamoyltransferase (305 aa).

Carbamoyl phosphate is bound by residues 54 to 57 (STRT), glutamine 81, arginine 105, and 132 to 135 (HPCQ). L-ornithine is bound by residues asparagine 163, aspartate 220, and 224–225 (SM). Residues 260–261 (CL) and arginine 288 each bind carbamoyl phosphate.

It belongs to the aspartate/ornithine carbamoyltransferase superfamily. OTCase family.

It is found in the cytoplasm. It carries out the reaction carbamoyl phosphate + L-ornithine = L-citrulline + phosphate + H(+). Its pathway is amino-acid biosynthesis; L-arginine biosynthesis; L-arginine from L-ornithine and carbamoyl phosphate: step 1/3. Reversibly catalyzes the transfer of the carbamoyl group from carbamoyl phosphate (CP) to the N(epsilon) atom of ornithine (ORN) to produce L-citrulline. The chain is Ornithine carbamoyltransferase from Chromohalobacter salexigens (strain ATCC BAA-138 / DSM 3043 / CIP 106854 / NCIMB 13768 / 1H11).